The following is an 82-amino-acid chain: Small ribosomal subunit protein bS20 (82 aa).

Positions 1 to 29 (MPNIKSAKKDLRRSRAAAVRNRAQRSALR) are disordered. Low complexity predominate over residues 16 to 29 (AAAVRNRAQRSALR).

It belongs to the bacterial ribosomal protein bS20 family.

Its function is as follows. Binds directly to 16S ribosomal RNA. The sequence is that of Small ribosomal subunit protein bS20 from Gemmatimonas aurantiaca (strain DSM 14586 / JCM 11422 / NBRC 100505 / T-27).